The primary structure comprises 186 residues: Putative CTD phosphatase-like protein 355R (186 aa).

One can recognise an FCP1 homology domain in the interval 2–182 (ENNKKKLILL…TELLKVQKTL (181 aa)).

This sequence belongs to the IIV-6 355R family.

Its function is as follows. May function as a phosphatase. This Aedes vexans (Inland floodwater mosquito) protein is Putative CTD phosphatase-like protein 355R.